A 137-amino-acid chain; its full sequence is Phosphoribosyl-AMP cyclohydrolase (137 aa).

Asp-84 serves as a coordination point for Mg(2+). Cys-85 serves as a coordination point for Zn(2+). Mg(2+) is bound by residues Asp-86 and Asp-88. Residues Cys-101 and Cys-108 each contribute to the Zn(2+) site.

The protein belongs to the PRA-CH family. Homodimer. Requires Mg(2+) as cofactor. Zn(2+) is required as a cofactor.

It localises to the cytoplasm. The catalysed reaction is 1-(5-phospho-beta-D-ribosyl)-5'-AMP + H2O = 1-(5-phospho-beta-D-ribosyl)-5-[(5-phospho-beta-D-ribosylamino)methylideneamino]imidazole-4-carboxamide. Its pathway is amino-acid biosynthesis; L-histidine biosynthesis; L-histidine from 5-phospho-alpha-D-ribose 1-diphosphate: step 3/9. In terms of biological role, catalyzes the hydrolysis of the adenine ring of phosphoribosyl-AMP. The protein is Phosphoribosyl-AMP cyclohydrolase of Chlorobium limicola (strain DSM 245 / NBRC 103803 / 6330).